The sequence spans 589 residues: Zinc finger protein 131 (589 aa).

One can recognise a BTB domain in the interval 34 to 98 (TDITLIVDGH…TYTAKLMIQG (65 aa)). Positions 137–148 (TGKNEAKKRKIA) match the Nuclear localization signal 1 motif. A compositionally biased stretch (basic and acidic residues) spans 224-234 (GDRKGQIKEDG). The interval 224 to 247 (GDRKGQIKEDGCPSDPTSKQEHMK) is disordered. 2 consecutive C2H2-type zinc fingers follow at residues 254–277 (FKCE…NCYH) and 294–316 (HVCQ…LRKH). Residues lysine 255 and lysine 261 each participate in a glycyl lysine isopeptide (Lys-Gly) (interchain with G-Cter in SUMO2) cross-link. The short motif at 283–294 (VSKKQRTGKKIH) is the Nuclear localization signal 2 element. Residues 322–347 (FECPNCHERFARNSTLKCHLTACQTG) form a C2H2-type 3; degenerate zinc finger. C2H2-type zinc fingers lie at residues 358–380 (YECQ…LVIH) and 386–409 (NHCT…SDAH). A compositionally biased stretch (basic and acidic residues) spans 539-583 (NQEERESSQADAAEAAREDHEDAEDLETKPTVDSEAEKAENEDRT). Positions 539 to 589 (NQEERESSQADAAEAAREDHEDAEDLETKPTVDSEAEKAENEDRTAMPVLE) are disordered. A Glycyl lysine isopeptide (Lys-Gly) (interchain with G-Cter in SUMO) cross-link involves residue lysine 567.

It belongs to the krueppel C2H2-type zinc-finger protein family. Post-translationally, monosumoylated at Lys-567 by CBX4 and UHRF2. Sumoylation may potentiate ZNF131 inhibition of estrogen signaling. Sumoylation does not interfere with ubiquitination. In terms of processing, ubiquitinated.

Its subcellular location is the nucleus. May be involved in transcriptional regulation as a repressor of ESR1/ER-alpha signaling. Plays a role during development and organogenesis as well as in the function of the adult central nervous system. The sequence is that of Zinc finger protein 131 (ZNF131) from Pongo abelii (Sumatran orangutan).